A 226-amino-acid polypeptide reads, in one-letter code: MTLLILLRHGQSVWNQKNLFTGWVDIPLSQQGIQEALTAGEAIKNLPIDCIFTSTLVRSLMTALLAMTNHSSKKIPYIIHEERPDMSRIHSEKELEQMIPLFQSSALNERMYGELQGKNKQEVAEQFGEEQVRLWRRSYKIAPPQGESLFDTAQRTLPYFQKRIFPLIQQGKNIFISAHGNSLRSLIMDLEKLTEEEVLSLELPTGKPIVYEWTEQKFTKSALSFG.

Substrate is bound by residues 8 to 15 (RHGQSVWN), 21 to 22 (TG), Arg-58, 109 to 112 (ERMY), Lys-120, 136 to 137 (RR), and 180 to 181 (GN). His-9 serves as the catalytic Tele-phosphohistidine intermediate. The active-site Proton donor/acceptor is the Glu-109.

Belongs to the phosphoglycerate mutase family. BPG-dependent PGAM subfamily.

The catalysed reaction is (2R)-2-phosphoglycerate = (2R)-3-phosphoglycerate. The protein operates within carbohydrate degradation; glycolysis; pyruvate from D-glyceraldehyde 3-phosphate: step 3/5. Functionally, catalyzes the interconversion of 2-phosphoglycerate and 3-phosphoglycerate. This is 2,3-bisphosphoglycerate-dependent phosphoglycerate mutase from Chlamydia muridarum (strain MoPn / Nigg).